A 300-amino-acid chain; its full sequence is Protoheme IX farnesyltransferase (300 aa).

8 consecutive transmembrane segments (helical) span residues 24-44 (VTQL…PGMV), 46-66 (WHVL…AFAI), 94-114 (PQIL…LYTF), 118-138 (LTMW…TLLL), 146-166 (IVIG…AVTG), 172-192 (AWIL…VLAL), 224-244 (VILF…VVYL), and 278-298 (IVYL…RPLL).

This sequence belongs to the UbiA prenyltransferase family. Protoheme IX farnesyltransferase subfamily.

Its subcellular location is the cell inner membrane. The catalysed reaction is heme b + (2E,6E)-farnesyl diphosphate + H2O = Fe(II)-heme o + diphosphate. It functions in the pathway porphyrin-containing compound metabolism; heme O biosynthesis; heme O from protoheme: step 1/1. Functionally, converts heme B (protoheme IX) to heme O by substitution of the vinyl group on carbon 2 of heme B porphyrin ring with a hydroxyethyl farnesyl side group. This is Protoheme IX farnesyltransferase from Burkholderia ambifaria (strain MC40-6).